We begin with the raw amino-acid sequence, 97 residues long: Large ribosomal subunit protein eL21 (97 aa).

A compositionally biased stretch (basic residues) spans 1–24 (MVQKAHSFRRKTRKKLRKHPRRRG). Positions 1–25 (MVQKAHSFRRKTRKKLRKHPRRRGL) are disordered.

Belongs to the eukaryotic ribosomal protein eL21 family.

This chain is Large ribosomal subunit protein eL21 (rpl21e), found in Pyrococcus abyssi (strain GE5 / Orsay).